Reading from the N-terminus, the 290-residue chain is 33 kDa chaperonin (290 aa).

2 disulfides stabilise this stretch: Cys231–Cys233 and Cys263–Cys266.

This sequence belongs to the HSP33 family. Post-translationally, under oxidizing conditions two disulfide bonds are formed involving the reactive cysteines. Under reducing conditions zinc is bound to the reactive cysteines and the protein is inactive.

Its subcellular location is the cytoplasm. Functionally, redox regulated molecular chaperone. Protects both thermally unfolding and oxidatively damaged proteins from irreversible aggregation. Plays an important role in the bacterial defense system toward oxidative stress. In Thermotoga sp. (strain RQ2), this protein is 33 kDa chaperonin.